The primary structure comprises 722 residues: Dipeptidyl aminopeptidase BII (722 aa).

The signal sequence occupies residues 1–24 (MRPNLLAAAIAVPLSLLAAQIAQA). 2 disulfide bridges follow: Cys-70–Cys-87 and Cys-166–Cys-174. The active-site Charge relay system is His-86. Position 215 to 216 (215 to 216 (NW)) interacts with substrate. Asp-224 acts as the Charge relay system in catalysis. Residues Asn-330, 655-657 (GNS), and 673-674 (FD) contribute to the substrate site. The active-site Charge relay system is the Ser-657.

Belongs to the peptidase S46 family. As to quaternary structure, homodimer.

With respect to regulation, completely inhibited by the serine protease inhibitor diisopropyl fluorophosphate (DFP) and potently inhibited by 0.5 mM ZnCl(2), 10 mM o-phenanthlorine, phenylmethanesulfonyl fluoride (PMSF) and N-tosyl-L-phenyl-alanyl chloromethyl ketone (TPCK), but not by N-tosyl-L-lysyl chloromethyl ketone (TLCK). Activity is not affected significantly by protease inhibitors, such as chymostatin, leupeptin, N-ethylmaleimide (NEM), iodoacetate (IAA), L-trans-epoxysuccinyl-leucylamido(4-guanido)butane (E64) and pepstatin A or by CoCl(2), CaCl(2) and EDTA. In terms of biological role, exopeptidase that catalyzes the removal of dipeptide units (NH2-P2-P1-) from the free amino termini of oligopeptides and small proteins. Peptide digestion is sequential and substrate recognition is non-specific, with the exception that Pro is not suitable as a P1 residue. Removes many residues of bioactive oligopeptides such as angiotensin I and neuromedin N and also cleaves oxidized insulin B chain. Able to hydrolyze an X-Pro bond, an imido bond. No endopeptidase activity. May play a physiological role in feeding. This is Dipeptidyl aminopeptidase BII from Pseudoxanthomonas mexicana.